The sequence spans 557 residues: 2,3-bisphosphoglycerate-independent phosphoglycerate mutase 1 (557 aa).

The Mn(2+) site is built by D27 and S80. S80 (phosphoserine intermediate) is an active-site residue. Substrate contacts are provided by residues H139, 169–170 (RD), R205, R212, 285–288 (RADR), and K360. Mn(2+) contacts are provided by D429, H433, D470, H471, and H500.

The protein belongs to the BPG-independent phosphoglycerate mutase family. Monomer. It depends on Mn(2+) as a cofactor.

It is found in the cytoplasm. The enzyme catalyses (2R)-2-phosphoglycerate = (2R)-3-phosphoglycerate. It functions in the pathway carbohydrate degradation; glycolysis; pyruvate from D-glyceraldehyde 3-phosphate: step 3/5. In terms of biological role, catalyzes the interconversion of 2-phosphoglycerate (2-PGA) and 3-phosphoglycerate (3-PGA). Required for guard cell function (e.g. blue light-, abscisic acid- (ABA), and low CO(2)-regulated stomatal movements) and fertility (e.g. pollen grains production). The protein is 2,3-bisphosphoglycerate-independent phosphoglycerate mutase 1 (PGM1) of Arabidopsis thaliana (Mouse-ear cress).